Here is an 88-residue protein sequence, read N- to C-terminus: Large ribosomal subunit protein eL15 (88 aa).

This sequence belongs to the eukaryotic ribosomal protein eL15 family.

The chain is Large ribosomal subunit protein eL15 (RPL15) from Brassica napus (Rape).